Here is a 397-residue protein sequence, read N- to C-terminus: 1-deoxy-D-xylulose 5-phosphate reductoisomerase (397 aa).

T10, G11, S12, I13, Q38, and N123 together coordinate NADPH. Position 124 (K124) interacts with 1-deoxy-D-xylulose 5-phosphate. E125 contributes to the NADPH binding site. Mn(2+) is bound at residue D149. 1-deoxy-D-xylulose 5-phosphate-binding residues include S150, E151, S185, and H208. Residue E151 coordinates Mn(2+). Position 214 (G214) interacts with NADPH. S221, N226, K227, and E230 together coordinate 1-deoxy-D-xylulose 5-phosphate. E230 contacts Mn(2+).

The protein belongs to the DXR family. Requires Mg(2+) as cofactor. It depends on Mn(2+) as a cofactor.

It catalyses the reaction 2-C-methyl-D-erythritol 4-phosphate + NADP(+) = 1-deoxy-D-xylulose 5-phosphate + NADPH + H(+). Its pathway is isoprenoid biosynthesis; isopentenyl diphosphate biosynthesis via DXP pathway; isopentenyl diphosphate from 1-deoxy-D-xylulose 5-phosphate: step 1/6. Catalyzes the NADPH-dependent rearrangement and reduction of 1-deoxy-D-xylulose-5-phosphate (DXP) to 2-C-methyl-D-erythritol 4-phosphate (MEP). This is 1-deoxy-D-xylulose 5-phosphate reductoisomerase from Idiomarina loihiensis (strain ATCC BAA-735 / DSM 15497 / L2-TR).